The primary structure comprises 187 residues: Intraflagellar transport protein 22 homolog (187 aa).

Residues glycine 10–threonine 17, aspartate 65–aspartate 69, and histidine 125–glycine 128 contribute to the GTP site.

The protein belongs to the small GTPase superfamily. Rab family.

In Danio rerio (Zebrafish), this protein is Intraflagellar transport protein 22 homolog (ift22).